A 430-amino-acid chain; its full sequence is Phosphoserine aminotransferase 1, chloroplastic (430 aa).

Residues 1 to 51 (MAATTNSFLVGSNNTQIPALKPKSSSQSFLHLSKPNTVNFVSKTKPVAVRC) constitute a chloroplast transit peptide. N-acetylvaline is present on valine 52. Arginine 111 contacts L-glutamate. Pyridoxal 5'-phosphate contacts are provided by residues 145–146 (AT), tryptophan 171, threonine 221, aspartate 241, and glutamine 264. Lysine 265 carries the N6-(pyridoxal phosphate)lysine modification. 306–307 (NT) serves as a coordination point for pyridoxal 5'-phosphate.

The protein belongs to the class-V pyridoxal-phosphate-dependent aminotransferase family. SerC subfamily. As to quaternary structure, homodimer. Pyridoxal 5'-phosphate serves as cofactor. As to expression, ubiquitous, but expressed preferentially in light-grown roots and shoots. Detected in root meristems and in root tissues surrounding the vascular bundle.

It is found in the plastid. Its subcellular location is the chloroplast. The catalysed reaction is O-phospho-L-serine + 2-oxoglutarate = 3-phosphooxypyruvate + L-glutamate. It catalyses the reaction 4-(phosphooxy)-L-threonine + 2-oxoglutarate = (R)-3-hydroxy-2-oxo-4-phosphooxybutanoate + L-glutamate. It participates in amino-acid biosynthesis; L-serine biosynthesis; L-serine from 3-phospho-D-glycerate: step 2/3. The protein operates within cofactor biosynthesis; pyridoxine 5'-phosphate biosynthesis; pyridoxine 5'-phosphate from D-erythrose 4-phosphate: step 3/5. Its activity is regulated as follows. Inhibited by high concentration of cysteine and by 3-phosphonooxypyruvate. Not inhibited by serine, threonine, valine, glycine, tryptophan and O-acetyl-L-serine. Functionally, involved in the plastidial phosphorylated pathway of serine biosynthesis (PPSB). Catalyzes the reversible conversion of 3-phosphohydroxypyruvate to phosphoserine. The chain is Phosphoserine aminotransferase 1, chloroplastic from Arabidopsis thaliana (Mouse-ear cress).